Here is a 344-residue protein sequence, read N- to C-terminus: Transcription factor JunB (344 aa).

Glycyl lysine isopeptide (Lys-Gly) (interchain with G-Cter in SUMO2) cross-links involve residues K4, K33, and K36. Gly residues predominate over residues 51–65 (KGPGARGPGPEGSGA). The interval 51–75 (KGPGARGPGPEGSGAGSYFSGQGSD) is disordered. K81 is covalently cross-linked (Glycyl lysine isopeptide (Lys-Gly) (interchain with G-Cter in SUMO2)). T102 and T104 each carry phosphothreonine. The residue at position 117 (S117) is a Phosphoserine. A Glycyl lysine isopeptide (Lys-Gly) (interchain with G-Cter in SUMO2) cross-link involves residue K138. 2 disordered regions span residues 181–202 (NLSS…VGTG) and 237–257 (KEEP…PVSP). The span at 183-192 (SSYSPASAPS) shows a compositional bias: low complexity. The residue at position 237 (K237) is an N6-acetyllysine; alternate. K237 participates in a covalent cross-link: Glycyl lysine isopeptide (Lys-Gly) (interchain with G-Cter in SUMO1); alternate. K237 participates in a covalent cross-link: Glycyl lysine isopeptide (Lys-Gly) (interchain with G-Cter in SUMO2); alternate. Basic and acidic residues predominate over residues 237–250 (KEEPQTVPEARSRD). S248 bears the Phosphoserine mark. T252 bears the Phosphothreonine mark. The residue at position 256 (S256) is a Phosphoserine. Positions 265 to 292 (RIKVERKRLRNRLAATKCRKRKLERIAR) are basic motif. In terms of domain architecture, bZIP spans 265–328 (RIKVERKRLR…AQLKQKVMTH (64 aa)). The tract at residues 293 to 321 (LEDKVKTLKAENAGLSSAAGLLREQVAQL) is leucine-zipper. A Glycyl lysine isopeptide (Lys-Gly) (interchain with G-Cter in SUMO2) cross-link involves residue K340.

This sequence belongs to the bZIP family. Jun subfamily. As to quaternary structure, binds DNA as a homodimer or as a heterodimer with another member of the Jun/Fos family. Component of an AP-1 transcription factor complex composed of JUN-FOS heterodimers. As part of the AP-1 transcription factor complex, forms heterodimers with FOSB, thereby binding to the AP-1 consensus sequence and stimulating transcription. Interacts with NFE2 (via its WW domains). In terms of processing, ubiquitinated by ITCH, leading to its degradation.

Its subcellular location is the nucleus. Functionally, transcription factor involved in regulating gene activity following the primary growth factor response. Binds to the DNA sequence 5'-TGA[GC]TCA-3'. Heterodimerizes with proteins of the FOS family to form an AP-1 transcription complex, thereby enhancing its DNA binding activity to an AP-1 consensus sequence 5'-TGA[GC]TCA-3' and enhancing its transcriptional activity. In Mus musculus (Mouse), this protein is Transcription factor JunB (Junb).